A 977-amino-acid chain; its full sequence is Glycine dehydrogenase (decarboxylating) (977 aa).

At K702 the chain carries N6-(pyridoxal phosphate)lysine.

This sequence belongs to the GcvP family. In terms of assembly, the glycine cleavage system is composed of four proteins: P, T, L and H. Requires pyridoxal 5'-phosphate as cofactor.

The enzyme catalyses N(6)-[(R)-lipoyl]-L-lysyl-[glycine-cleavage complex H protein] + glycine + H(+) = N(6)-[(R)-S(8)-aminomethyldihydrolipoyl]-L-lysyl-[glycine-cleavage complex H protein] + CO2. Its function is as follows. The glycine cleavage system catalyzes the degradation of glycine. The P protein binds the alpha-amino group of glycine through its pyridoxal phosphate cofactor; CO(2) is released and the remaining methylamine moiety is then transferred to the lipoamide cofactor of the H protein. The polypeptide is Glycine dehydrogenase (decarboxylating) (Xanthomonas axonopodis pv. citri (strain 306)).